Reading from the N-terminus, the 122-residue chain is Large ribosomal subunit protein uL14 (122 aa).

Belongs to the universal ribosomal protein uL14 family. Part of the 50S ribosomal subunit. Forms a cluster with proteins L3 and L19. In the 70S ribosome, L14 and L19 interact and together make contacts with the 16S rRNA in bridges B5 and B8.

Its function is as follows. Binds to 23S rRNA. Forms part of two intersubunit bridges in the 70S ribosome. The protein is Large ribosomal subunit protein uL14 of Caldicellulosiruptor saccharolyticus (strain ATCC 43494 / DSM 8903 / Tp8T 6331).